A 214-amino-acid polypeptide reads, in one-letter code: MRSGLIGRKLGMSQMFTEDGQRIPVTLVQLGPCAVVAKRSDEQDGYNAVQLGFEEAKPSRLSKTVRGQYAKANVTPRRVLREFRVSNPESYEVGQELTAEQFAVDSFVDVTGKTVGKGFAGVMKRWGFRGGRASHGAHKVHRSGGSIGQCQTPGRVYKNKKMAGHMGQQTRTVQNLKVAYVDAVQSIIAVKGSIPGSKGSLVLVRDALKKGSAE.

At Gln-151 the chain carries N5-methylglutamine.

It belongs to the universal ribosomal protein uL3 family. As to quaternary structure, part of the 50S ribosomal subunit. Forms a cluster with proteins L14 and L19. In terms of processing, methylated by PrmB.

One of the primary rRNA binding proteins, it binds directly near the 3'-end of the 23S rRNA, where it nucleates assembly of the 50S subunit. The protein is Large ribosomal subunit protein uL3 of Magnetococcus marinus (strain ATCC BAA-1437 / JCM 17883 / MC-1).